The primary structure comprises 423 residues: MMAPSIDTMAEELDTSITESTMALSVYLLATAFGPLIIGPVSEIYGRKSIFHITNIWFLVWNLVCGFAHSKGLLMAARLLAGFGASAVYSLGYGVLGDVWSAEQRGRSLSLYLLIPLTGSAVGPIVSGFIVKYSTWRWMFWSTAILQLTLDLSSLLFHESYAPLLLRRRAEELRSNTGGSRYHAAIEMREAGLSPPRKLSRSLSRPLRLLAFHPIIQMQAILEGIDYGLLYFALSSFSALHVAAYGESVEISGLHYIVICIGTVSGSQLCGPLMDYAYQRLSSNTGETQVPELRIPLLLPGALITPIGFLLYGWAAQYHLIWVVVDVGAALLSLGMQIFDTTLHAYVMDSYPEHVSSASAATQVLRSLLAFAFPLFSNSLYDSLGYGLGNSLLAFLSIGIALPATGILWRWGATLRGRQQSSY.

Helical transmembrane passes span 21–41 (TMAL…IGPV), 49–69 (SIFH…GFAH), 79–99 (LLAG…LGDV), 111–131 (LYLL…GFIV), 138–158 (WMFW…LLFH), 220–240 (AILE…FSAL), 256–278 (YIVI…DYAY), 295–315 (IPLL…YGWA), 319–339 (HLIW…MQIF), 360–380 (AATQ…SNSL), and 392–411 (LLAF…LWRW).

It belongs to the major facilitator superfamily.

The protein localises to the membrane. In terms of biological role, probable efflux pump; part of the gene cluster 27 that mediates the biosynthesis of asparasone A, a sclerotium-specific anthraquinone pigment important for sclerotial survival. This chain is Probable efflux pump mfs2, found in Aspergillus flavus (strain ATCC 200026 / FGSC A1120 / IAM 13836 / NRRL 3357 / JCM 12722 / SRRC 167).